The sequence spans 486 residues: Betaine aldehyde dehydrogenase (486 aa).

K(+)-binding residues include Thr23 and Asp90. NAD(+) is bound at residue 147–149 (GAW). Lys159 acts as the Charge relay system in catalysis. NAD(+) is bound by residues 173 to 176 (KPSE) and 226 to 229 (ESGT). Leu241 provides a ligand contact to K(+). The Proton acceptor role is filled by Glu247. Residues Gly249, Cys281, and Glu382 each coordinate NAD(+). Cys281 acts as the Nucleophile in catalysis. The residue at position 281 (Cys281) is a Cysteine sulfenic acid (-SOH). K(+) is bound by residues Lys452 and Gly455. Glu459 functions as the Charge relay system in the catalytic mechanism.

Belongs to the aldehyde dehydrogenase family. As to quaternary structure, dimer of dimers. K(+) is required as a cofactor.

It carries out the reaction betaine aldehyde + NAD(+) + H2O = glycine betaine + NADH + 2 H(+). It functions in the pathway amine and polyamine biosynthesis; betaine biosynthesis via choline pathway; betaine from betaine aldehyde: step 1/1. Its function is as follows. Involved in the biosynthesis of the osmoprotectant glycine betaine. Catalyzes the irreversible oxidation of betaine aldehyde to the corresponding acid. The polypeptide is Betaine aldehyde dehydrogenase (Vibrio campbellii (strain ATCC BAA-1116)).